We begin with the raw amino-acid sequence, 395 residues long: ATP synthase subunit beta, chloroplastic (395 aa).

Residue 72-79 (GGAGVGKT) coordinates ATP.

It belongs to the ATPase alpha/beta chains family. In terms of assembly, F-type ATPases have 2 components, CF(1) - the catalytic core - and CF(0) - the membrane proton channel. CF(1) has five subunits: alpha(3), beta(3), gamma(1), delta(1), epsilon(1). CF(0) has four main subunits: a(1), b(1), b'(1) and c(9-12).

Its subcellular location is the plastid. It is found in the chloroplast thylakoid membrane. It carries out the reaction ATP + H2O + 4 H(+)(in) = ADP + phosphate + 5 H(+)(out). Functionally, produces ATP from ADP in the presence of a proton gradient across the membrane. The catalytic sites are hosted primarily by the beta subunits. This is ATP synthase subunit beta, chloroplastic from Blechnum occidentale (Hammock fern).